Consider the following 873-residue polypeptide: K(+)/H(+) antiporter 1 (873 aa).

The Extracellular segment spans residues 1-23; it reads MANTVGGILSGVNPFHYNSSSPL. A helical membrane pass occupies residues 24 to 44; sequence TLFLFQACLILLVCNLIHIPF. The Cytoplasmic segment spans residues 45–51; the sequence is SMMRQPK. The helical transmembrane segment at 52–72 threads the bilayer; that stretch reads VISEVISGVILGPTIFGQIPN. The Extracellular segment spans residues 73–82; that stretch reads YTNTIFPTSS. The chain crosses the membrane as a helical span at residues 83–103; it reads IPGLNLVANLGIILFMFFLGL. The Cytoplasmic segment spans residues 104–116; the sequence is EVDIAFIKKHLKK. The helical transmembrane segment at 117–137 threads the bilayer; the sequence is ALVIGIVTLAVPFGFGCLLAI. Residues 138–154 lie on the Extracellular side of the membrane; that stretch reads PLFHTYANKTEGERHIK. The helical transmembrane segment at 155-175 threads the bilayer; it reads FSVFMVFIAVSISVTAFPVLC. Topologically, residues 176 to 188 are cytoplasmic; that stretch reads RILNELRLIKDRA. Residues 189-209 form a helical membrane-spanning segment; the sequence is GIVVLAAGIINDIMGWILLAL. The Extracellular portion of the chain corresponds to 210-220; that stretch reads SIILSSAEGSP. A helical transmembrane segment spans residues 221 to 241; sequence VNTVYILLITFAWFLIYFFPL. The Cytoplasmic segment spans residues 242–267; sequence KYLLRWVLIRTHELDRSKPSPLATMC. The chain crosses the membrane as a helical span at residues 268–288; sequence ILFIMFISAYFTDIIGVHPIF. Over 289–316 the chain is Extracellular; it reads GAFIAGLVVPRDDHYVVKLTERMEDIPN. The helical transmembrane segment at 317–337 threads the bilayer; the sequence is IVFIPIYFAVAGLNVDLTLLN. Residues 338-341 lie on the Cytoplasmic side of the membrane; it reads EGRD. Residues 342–362 form a helical membrane-spanning segment; that stretch reads WGYVFATIGIAIFTKIISGTL. At 363-375 the chain is on the extracellular side; it reads TAKLTGLFWREAT. Residues 376–396 form a helical membrane-spanning segment; sequence AAGVLMSCKGIVEIVVLTVGL. Over 397–404 the chain is Cytoplasmic; that stretch reads NAGIISRK. A helical transmembrane segment spans residues 405–425; sequence IFGMFVLMALVSTFVTTPLTQ. The Extracellular segment spans residues 426–726; it reads LVYPDSYRDG…DRFKRKRFNL (301 aa). Ser-557 bears the Phosphoserine mark. Lys-562 participates in a covalent cross-link: Glycyl lysine isopeptide (Lys-Gly) (interchain with G-Cter in ubiquitin). The chain crosses the membrane as a helical span at residues 727-747; the sequence is LLPKPYLTQSDYLGLYLLLLI. At 748-873 the chain is on the cytoplasmic side; that stretch reads CYRDGYNNDN…TLIVHHFSSE (126 aa).

Belongs to the monovalent cation:proton antiporter 2 (CPA2) transporter (TC 2.A.37) family.

The protein resides in the membrane. Functionally, potassium-proton antiport. In Saccharomyces cerevisiae (strain ATCC 204508 / S288c) (Baker's yeast), this protein is K(+)/H(+) antiporter 1 (KHA1).